A 442-amino-acid polypeptide reads, in one-letter code: Meiotically up-regulated gene 191 protein (442 aa).

At Thr361 the chain carries Phosphothreonine. The segment covering 416 to 429 (RNNPSSGESTTLPQ) has biased composition (polar residues). The interval 416–442 (RNNPSSGESTTLPQPSHGKKDKDCVIS) is disordered. Over residues 433–442 (GKKDKDCVIS) the composition is skewed to basic and acidic residues.

The protein localises to the cytoplasm. The protein resides in the nucleus. In terms of biological role, has a role in meiosis. This Schizosaccharomyces pombe (strain 972 / ATCC 24843) (Fission yeast) protein is Meiotically up-regulated gene 191 protein (mug191).